Consider the following 410-residue polypeptide: LL-diaminopimelate aminotransferase (410 aa).

Substrate-binding residues include Tyr-15 and Gly-42. Pyridoxal 5'-phosphate is bound by residues Tyr-72, 108–109 (AK), Tyr-132, Asn-188, Tyr-219, and 247–249 (SFS). Lys-109, Tyr-132, and Asn-188 together coordinate substrate. Lys-250 is modified (N6-(pyridoxal phosphate)lysine). Arg-258 and Asn-293 together coordinate pyridoxal 5'-phosphate. Positions 293 and 389 each coordinate substrate.

It belongs to the class-I pyridoxal-phosphate-dependent aminotransferase family. LL-diaminopimelate aminotransferase subfamily. Homodimer. Pyridoxal 5'-phosphate is required as a cofactor.

It catalyses the reaction (2S,6S)-2,6-diaminopimelate + 2-oxoglutarate = (S)-2,3,4,5-tetrahydrodipicolinate + L-glutamate + H2O + H(+). It functions in the pathway amino-acid biosynthesis; L-lysine biosynthesis via DAP pathway; LL-2,6-diaminopimelate from (S)-tetrahydrodipicolinate (aminotransferase route): step 1/1. In terms of biological role, involved in the synthesis of meso-diaminopimelate (m-DAP or DL-DAP), required for both lysine and peptidoglycan biosynthesis. Catalyzes the direct conversion of tetrahydrodipicolinate to LL-diaminopimelate. Can also use m-DAP instead of LL-DAP as the amino-group donor. This is LL-diaminopimelate aminotransferase from Bacteroides fragilis (strain ATCC 25285 / DSM 2151 / CCUG 4856 / JCM 11019 / LMG 10263 / NCTC 9343 / Onslow / VPI 2553 / EN-2).